Consider the following 670-residue polypeptide: Leiomodin-3 (670 aa).

Disordered regions lie at residues 34 to 72 (EMDDIAPDERVPVGLRQKDASHEMTVRDCTEPESEEEID), 94 to 120 (EIAPDERVPVGMRQRDQTDKPPTGSFD), 139 to 165 (EEERVPTTLLPSQKTNEEHEAKNEDKV), and 202 to 274 (EDKV…NWVP). 5 stretches are compositionally biased toward basic and acidic residues: residues 40–63 (PDERVPVGLRQKDASHEMTVRDCT), 97–112 (PDERVPVGMRQRDQTD), 153–163 (TNEEHEAKNED), 205–214 (VCDKPVKTDL), and 249–261 (TETKVNEEKKEDS). Positions 150-183 (SQKTNEEHEAKNEDKVEELELVYEEIVEEVEGGQ) form a coiled coil. The stretch at 464-494 (DRQRQQRMEEQKLQQMKEQRKVMEMYEDSLN) forms a coiled coil. The tract at residues 517 to 556 (NGAEDIPEDSPEPSPQPSPPHQLCKTQHLAPQQHPPNLST) is disordered. The region spanning 637–656 (PRDHLLSEIRQSNVAYLKAV) is the WH2 domain.

This sequence belongs to the tropomodulin family. Expressed in muscle (at protein level).

Its subcellular location is the cytoplasm. It localises to the myofibril. The protein localises to the sarcomere. It is found in the a band. The protein resides in the m line. Its subcellular location is the cytoskeleton. Functionally, essential for the organization of sarcomeric thin filaments in skeletal muscle. The polypeptide is Leiomodin-3 (Danio rerio (Zebrafish)).